We begin with the raw amino-acid sequence, 452 residues long: GTPase Der (452 aa).

2 EngA-type G domains span residues 4–169 (PVVA…PPAA) and 177–352 (IKVA…ESHR). Residues 10–17 (GRPNVGKS), 57–61 (DTGGL), 120–123 (NKCE), 183–190 (GRPNVGKS), 230–234 (DTAGI), and 295–298 (NKWD) each bind GTP. The 86-residue stretch at 353–438 (RRVSTSVIND…PIRLIWRGKP (86 aa)) folds into the KH-like domain.

It belongs to the TRAFAC class TrmE-Era-EngA-EngB-Septin-like GTPase superfamily. EngA (Der) GTPase family. In terms of assembly, associates with the 50S ribosomal subunit.

In terms of biological role, GTPase that plays an essential role in the late steps of ribosome biogenesis. In Microcystis aeruginosa (strain NIES-843 / IAM M-2473), this protein is GTPase Der.